A 402-amino-acid chain; its full sequence is Caspase-1 (402 aa).

The CARD domain maps to 1–91 (MADKILRAKR…YLAGILELQS (91 aa)). A propeptide spanning residues 1 to 118 (MADKILRAKR…PSSSETKEEQ (118 aa)) is cleaved from the precursor. The segment at 98 to 125 (FVATEDSKGGHPSSSETKEEQNKEDGTF) is disordered. Positions 113 to 123 (ETKEEQNKEDG) are enriched in basic and acidic residues. Active-site residues include His-236 and Cys-284. Positions 297–314 (SVRDSEEDFLTDAIFEDD) are excised as a propeptide. Ser-301 bears the Phosphoserine mark. An Omega-N-methylarginine modification is found at Arg-343.

This sequence belongs to the peptidase C14A family. As to quaternary structure, heterotetramer that consists of two anti-parallel arranged heterodimers, each one formed by a 20 kDa (Caspase-1 subunit p20) and a 10 kDa (Caspase-1 subunit p10) subunit. May be a component of the inflammasome, a protein complex which also includes PYCARD, CARD8 and NLRP2 and whose function would be the activation of pro-inflammatory caspases. Component of the AIM2 PANoptosome complex, a multiprotein complex that drives inflammatory cell death (PANoptosis). Both the p10 and p20 subunits interact with MEFV. Interacts with CARD17P/INCA and CARD18. Interacts with SERPINB1; this interaction regulates CASP1 activity. In terms of assembly, heterotetramer that consists of two anti-parallel arranged heterodimers, each one formed by a 20 kDa (Caspase-1 subunit p20) and a 10 kDa (Caspase-1 subunit p10) subunit. Post-translationally, the two subunits are derived from the precursor sequence by an autocatalytic mechanism. Ubiquitinated via 'Lys-11'-linked polyubiquitination. Deubiquitinated by USP8. In terms of tissue distribution, high level expression seen in spleen and lung, low level expression seen in brain, heart, liver, kidney, testis and skeletal muscle.

It is found in the cytoplasm. The protein resides in the cell membrane. The catalysed reaction is Strict requirement for an Asp residue at position P1 and has a preferred cleavage sequence of Tyr-Val-Ala-Asp-|-.. In terms of biological role, thiol protease involved in a variety of inflammatory processes by proteolytically cleaving other proteins, such as the precursors of the inflammatory cytokines interleukin-1 beta (IL1B) and interleukin 18 (IL18) as well as the pyroptosis inducer Gasdermin-D (GSDMD), into active mature peptides. Plays a key role in cell immunity as an inflammatory response initiator: once activated through formation of an inflammasome complex, it initiates a pro-inflammatory response through the cleavage of the two inflammatory cytokines IL1B and IL18, releasing the mature cytokines which are involved in a variety of inflammatory processes. Cleaves a tetrapeptide after an Asp residue at position P1. Also initiates pyroptosis, a programmed lytic cell death pathway, through cleavage of GSDMD. In contrast to cleavage of interleukin IL1B, recognition and cleavage of GSDMD is not strictly dependent on the consensus cleavage site but depends on an exosite interface on CASP1 that recognizes and binds the Gasdermin-D, C-terminal (GSDMD-CT) part. Cleaves and activates CASP7 in response to bacterial infection, promoting plasma membrane repair. Upon inflammasome activation, during DNA virus infection but not RNA virus challenge, controls antiviral immunity through the cleavage of CGAS, rendering it inactive. In apoptotic cells, cleaves SPHK2 which is released from cells and remains enzymatically active extracellularly. The chain is Caspase-1 (Casp1) from Mus musculus (Mouse).